The chain runs to 389 residues: Chalcone synthase E (389 aa).

The active site involves Cys-164.

Belongs to the thiolase-like superfamily. Chalcone/stilbene synthases family.

It carries out the reaction (E)-4-coumaroyl-CoA + 3 malonyl-CoA + 3 H(+) = 2',4,4',6'-tetrahydroxychalcone + 3 CO2 + 4 CoA. Its pathway is secondary metabolite biosynthesis; flavonoid biosynthesis. Its function is as follows. The primary product of this enzyme is 4,2',4',6'-tetrahydroxychalcone (also termed naringenin-chalcone or chalcone) which can under specific conditions spontaneously isomerize into naringenin. This Ipomoea nil (Japanese morning glory) protein is Chalcone synthase E (CHSE).